The primary structure comprises 192 residues: CASP-like protein 4C1 (192 aa).

Residues 1 to 11 (MRSPQSLRNGE) are compositionally biased toward polar residues. The disordered stretch occupies residues 1–23 (MRSPQSLRNGETPSPSPRPPRFP). Over 1 to 40 (MRSPQSLRNGETPSPSPRPPRFPTPHFHSTVSLQKLKRFN) the chain is Cytoplasmic. The segment covering 14-23 (SPSPRPPRFP) has biased composition (pro residues). A helical membrane pass occupies residues 41–61 (LLILVFRLSTFCFSLASSVFM). The Extracellular portion of the chain corresponds to 62–75 (LTNPTWYHFDAFRY). The chain crosses the membrane as a helical span at residues 76 to 96 (VFAANAIVAIYSLFEMAASVW). Topologically, residues 97–107 (EISRGNTLFPE) are cytoplasmic. Residues 108 to 128 (ILQVWFDFGHDQVFAYLLLSA) traverse the membrane as a helical segment. Topologically, residues 129-156 (DSAATALAKTLKGGDTCAASNAFCVQSY) are extracellular. Residues 157-177 (IAIALGFAGFLFLGLSSLLSG) form a helical membrane-spanning segment. Residues 178–192 (FRVVCFLINGSRFYV) are Cytoplasmic-facing.

This sequence belongs to the Casparian strip membrane proteins (CASP) family. As to quaternary structure, homodimer and heterodimers.

It localises to the cell membrane. The polypeptide is CASP-like protein 4C1 (Ricinus communis (Castor bean)).